The following is a 64-amino-acid chain: Small ribosomal subunit protein bS21 (64 aa).

The segment at 42 to 64 (KKEKEKAAAKKRNKYNKRRSFYY) is disordered. The span at 50-64 (AKKRNKYNKRRSFYY) shows a compositional bias: basic residues.

It belongs to the bacterial ribosomal protein bS21 family.

This chain is Small ribosomal subunit protein bS21, found in Malacoplasma penetrans (strain HF-2) (Mycoplasma penetrans).